A 364-amino-acid polypeptide reads, in one-letter code: Fructose-1,6-bisphosphatase class 1 1 (364 aa).

E99, D121, L123, and D124 together coordinate Mg(2+). Residues 124 to 127 and N220 contribute to the substrate site; that span reads DGSS. E292 provides a ligand contact to Mg(2+).

It belongs to the FBPase class 1 family. As to quaternary structure, homotetramer. The cofactor is Mg(2+).

It is found in the cytoplasm. It catalyses the reaction beta-D-fructose 1,6-bisphosphate + H2O = beta-D-fructose 6-phosphate + phosphate. It participates in carbohydrate biosynthesis; gluconeogenesis. In Albidiferax ferrireducens (strain ATCC BAA-621 / DSM 15236 / T118) (Rhodoferax ferrireducens), this protein is Fructose-1,6-bisphosphatase class 1 1.